A 423-amino-acid polypeptide reads, in one-letter code: NADP-specific glutamate dehydrogenase (423 aa).

The active site involves Lys-112.

It belongs to the Glu/Leu/Phe/Val dehydrogenases family. As to quaternary structure, homohexamer.

It catalyses the reaction L-glutamate + NADP(+) + H2O = 2-oxoglutarate + NH4(+) + NADPH + H(+). This chain is NADP-specific glutamate dehydrogenase (gdhA), found in Saccharolobus shibatae (strain ATCC 51178 / DSM 5389 / JCM 8931 / NBRC 15437 / B12) (Sulfolobus shibatae).